Reading from the N-terminus, the 142-residue chain is Hemoglobin subunit alpha (142 aa).

The 141-residue stretch at Val2 to Arg142 folds into the Globin domain. Ser4 is modified (phosphoserine). Lys8 carries the post-translational modification N6-succinyllysine. A Phosphothreonine modification is found at Thr9. Position 12 is an N6-succinyllysine (Lys12). An N6-acetyllysine; alternate modification is found at Lys17. Position 17 is an N6-succinyllysine; alternate (Lys17). Lys41 is modified (N6-succinyllysine). Ser50 is subject to Phosphoserine. His59 contributes to the O2 binding site. His88 provides a ligand contact to heme b. Residue Ser103 is modified to Phosphoserine. Thr109 carries the post-translational modification Phosphothreonine. Ser125 carries the post-translational modification Phosphoserine. Thr135 and Thr138 each carry phosphothreonine. At Ser139 the chain carries Phosphoserine.

The protein belongs to the globin family. Heterotetramer of two alpha chains and two beta chains. In terms of tissue distribution, red blood cells.

Its function is as follows. Involved in oxygen transport from the lung to the various peripheral tissues. Hemopressin acts as an antagonist peptide of the cannabinoid receptor CNR1. Hemopressin-binding efficiently blocks cannabinoid receptor CNR1 and subsequent signaling. This Equus zebra (Mountain zebra) protein is Hemoglobin subunit alpha (HBA).